The sequence spans 153 residues: Nascent polypeptide-associated complex subunit beta (153 aa).

2 disordered regions span residues 1 to 40 (MSDV…ADDK) and 126 to 153 (LQKE…PKVE). Residues 23–32 (TPRRKVKRAP) show a composition bias toward basic residues. In terms of domain architecture, NAC-A/B spans 36–101 (GADDKKLQLA…GEDKELTELV (66 aa)). The segment covering 132–147 (EDDDEIPDLVEGENFE) has biased composition (acidic residues).

It belongs to the NAC-beta family. Part of the nascent polypeptide-associated complex (NAC), consisting of EGD2 and EGD1. NAC associates with ribosomes via EGD1.

Its subcellular location is the cytoplasm. It is found in the nucleus. Component of the nascent polypeptide-associated complex (NAC), a dynamic component of the ribosomal exit tunnel, protecting the emerging polypeptides from interaction with other cytoplasmic proteins to ensure appropriate nascent protein targeting. The NAC complex also promotes mitochondrial protein import by enhancing productive ribosome interactions with the outer mitochondrial membrane and blocks the inappropriate interaction of ribosomes translating non-secretory nascent polypeptides with translocation sites in the membrane of the endoplasmic reticulum. EGD1 may act as a transcription factor that exert a negative effect on the expression of several genes that are transcribed by RNA polymerase II. The chain is Nascent polypeptide-associated complex subunit beta (EGD1) from Gibberella zeae (strain ATCC MYA-4620 / CBS 123657 / FGSC 9075 / NRRL 31084 / PH-1) (Wheat head blight fungus).